The sequence spans 152 residues: Small ribosomal subunit protein uS13A (152 aa).

Belongs to the universal ribosomal protein uS13 family. In terms of assembly, component of the small ribosomal subunit (SSU). Mature yeast ribosomes consist of a small (40S) and a large (60S) subunit. The 40S small subunit contains 1 molecule of ribosomal RNA (18S rRNA) and at least 33 different proteins. The large 60S subunit contains 3 rRNA molecules (25S, 5.8S and 5S rRNA) and at least 46 different proteins.

Its subcellular location is the cytoplasm. Functionally, component of the ribosome, a large ribonucleoprotein complex responsible for the synthesis of proteins in the cell. The small ribosomal subunit (SSU) binds messenger RNAs (mRNAs) and translates the encoded message by selecting cognate aminoacyl-transfer RNA (tRNA) molecules. The large subunit (LSU) contains the ribosomal catalytic site termed the peptidyl transferase center (PTC), which catalyzes the formation of peptide bonds, thereby polymerizing the amino acids delivered by tRNAs into a polypeptide chain. The nascent polypeptides leave the ribosome through a tunnel in the LSU and interact with protein factors that function in enzymatic processing, targeting, and the membrane insertion of nascent chains at the exit of the ribosomal tunnel. This is Small ribosomal subunit protein uS13A (rps1801) from Schizosaccharomyces pombe (strain 972 / ATCC 24843) (Fission yeast).